Consider the following 414-residue polypeptide: Arrestin domain-containing protein 3 (414 aa).

Short sequence motifs (PPxY motif) lie at residues 346–349 (PPSY) and 391–394 (PPLY). Residues 393 to 414 (LYSEIDPNPDQSSEDRPSCPSR) are disordered. The span at 405-414 (SEDRPSCPSR) shows a compositional bias: basic and acidic residues.

The protein belongs to the arrestin family. Interacts (via PPxY motifs) with NEDD4 (via WW domains). Interacts with ADRB2. Interacts with ADRB3. Interacts with HGS (via PPxY motifs). Does not bind TXN (thioredoxin). Interacts with ITCH.

It localises to the cytoplasm. The protein localises to the cell membrane. It is found in the lysosome. The protein resides in the endosome. Its subcellular location is the early endosome. Adapter protein that plays a role in regulating cell-surface expression of adrenergic receptors and probably also other G protein-coupled receptors. Plays a role in NEDD4-mediated ubiquitination and endocytosis af activated ADRB2 and subsequent ADRB2 degradation. May recruit NEDD4 to ADRB2. Alternatively, may function as adapter protein that does not play a major role in recruiting NEDD4 to ADRB2, but rather plays a role in a targeting ADRB2 to endosomes. The polypeptide is Arrestin domain-containing protein 3 (Arrdc3) (Rattus norvegicus (Rat)).